Reading from the N-terminus, the 475-residue chain is Putative aldehyde dehydrogenase (475 aa).

Residues 146-147 and 223-224 each bind NAD(+); these read WN and GS. Catalysis depends on E245, which acts as the Proton acceptor. L246 contacts NAD(+). The active-site Nucleophile is the C279. E379 provides a ligand contact to NAD(+).

The protein belongs to the aldehyde dehydrogenase family.

It catalyses the reaction an aldehyde + NAD(+) + H2O = a carboxylate + NADH + 2 H(+). This is Putative aldehyde dehydrogenase from Staphylococcus aureus (strain bovine RF122 / ET3-1).